A 340-amino-acid chain; its full sequence is DnaJ homolog subfamily B member 1 (340 aa).

In terms of domain architecture, J spans 2-70; sequence GKDYYQTLGL…REIFDRYGEE (69 aa). Position 307 is a phosphothreonine (T307).

In terms of assembly, interacts with DNAJC3. Interacts with HSF1 (via transactivation domain); this interaction results in the inhibition of heat shock- and HSF1-induced transcriptional activity during the attenuation and recovery phase period of the heat shock response. Interacts with BAG3.

It localises to the cytoplasm. Its subcellular location is the nucleus. The protein localises to the nucleolus. Its function is as follows. Interacts with HSP70 and can stimulate its ATPase activity. Stimulates the association between HSC70 and HIP. Negatively regulates heat shock-induced HSF1 transcriptional activity during the attenuation and recovery phase period of the heat shock response. Stimulates ATP hydrolysis and the folding of unfolded proteins mediated by HSPA1A/B (in vitro). This chain is DnaJ homolog subfamily B member 1 (DNAJB1), found in Homo sapiens (Human).